A 66-amino-acid chain; its full sequence is Large ribosomal subunit protein bL35 (66 aa).

This sequence belongs to the bacterial ribosomal protein bL35 family.

The polypeptide is Large ribosomal subunit protein bL35 (Treponema denticola (strain ATCC 35405 / DSM 14222 / CIP 103919 / JCM 8153 / KCTC 15104)).